The primary structure comprises 452 residues: Golgi reassembly-stacking protein 2 (452 aa).

Residue glycine 2 is the site of N-myristoyl glycine attachment. PDZ GRASP-type domains are found at residues 15–105 (EGYH…FCSF) and 111–199 (NVWH…YGYL). Residues 15–215 (EGYHVLRVQE…PFEEGKKISL (201 aa)) form a GRASP region. Arginine 30 and arginine 47 each carry dimethylated arginine. The important for membrane binding stretch occupies residues 194-199 (IGYGYL). Phosphoserine is present on serine 214. 2 positions are modified to phosphothreonine: threonine 222 and threonine 225. The segment covering 372-424 (PESSSAASSGELLSSLPPTSNAPSDPATTTAKADAASSLTVDVTPPTAKAPTT) has biased composition (low complexity). Residues 372–452 (PESSSAASSG…AVDANASESP (81 aa)) form a disordered region. Serine 409 bears the Phosphoserine mark. Residues threonine 415 and threonine 433 each carry the phosphothreonine modification. 4 positions are modified to phosphoserine: serine 436, serine 441, serine 449, and serine 451.

This sequence belongs to the GORASP family. As to quaternary structure, homodimer. Homooligomer. ER stress induces phosphorylation-dependent monomerization. Interacts with BLZF1/Golgin 45. Identified in a complex with RAB2 and GORASP2. Interacts with JAM2 and JAM3. Interacts with members of the p24 cargo receptors. Interacts with CNIH1 and the cytoplasmic domain of transmembrane TGFA, prior its transit in the trans-Golgi. Interacts with KCTD5. Interacts with TMED2 and TMED3. Interacts with SEC16A in response to ER stress. Interacts (via PDZ GRASP-type 1 domain) with core-glycosylated CFTR in response to ER stress. Myristoylated. Myristoylation is essential for the Golgi targeting. In terms of processing, palmitoylated. Post-translationally, phosphorylated in mitotic cells. ER stress-induced phosphorylation at Ser-441 induces monomerization and subsequent relocalization from Golgi to ER which is essential for mediating unconventional (ER/Golgi-independent) trafficking of CFTR to the cell membrane.

Its subcellular location is the golgi apparatus membrane. The protein localises to the endoplasmic reticulum membrane. The protein resides in the golgi apparatus. Functionally, key structural protein of the Golgi apparatus. The membrane cisternae of the Golgi apparatus adhere to each other to form stacks, which are aligned side by side to form the Golgi ribbon. Acting in concert with GORASP1/GRASP65, is required for the formation and maintenance of the Golgi ribbon, and may be dispensable for the formation of stacks. However, other studies suggest that GORASP2 plays a role in the assembly and membrane stacking of the Golgi cisternae, and in the process by which Golgi stacks reform after breakdown during mitosis and meiosis. May regulate the intracellular transport and presentation of a defined set of transmembrane proteins, such as transmembrane TGFA. Required for normal acrosome formation during spermiogenesis and normal male fertility, probably by promoting colocalization of JAM2 and JAM3 at contact sites between germ cells and Sertoli cells. Mediates ER stress-induced unconventional (ER/Golgi-independent) trafficking of core-glycosylated CFTR to cell membrane. In Homo sapiens (Human), this protein is Golgi reassembly-stacking protein 2 (GORASP2).